A 483-amino-acid chain; its full sequence is METIHNISNRLQEVLATNKSVNVDTDNDSLSSNQEDNEVEKVRHLVVILGEKYSYAVDRNTGINALMQWFTTNSEIPEEILNAIRSKLNFTYRTNFEPIERAPDGPSPINPLIMLRINPIDAIENVFNNRECFFTDVGWGCMIRTGQSLLGNALQRVKSTVKDQPYIYEMDDTKEITDLFKDNTKSAFSLQNFVKCGRIYNKIAPGEWFGPATTATCIRYLIQENPCYGIEACYISVSSGDIFKENIQGMIDRYPNGNILILLGIKLGLDSVHERYWGEIKTMLESPFSVGIAGGRPSSSLYFFGYFDDTLLFFDPHNSQTALIDDFDESCHTENFGKLNFSDLDPSMLLGFLLPCSKWDEFQEFTSLLTIVNVLDGMDQYRDPDLNSNDIGNVELSPQLKLSQTPDAITDDDYVDIGALIQGNSMNINDRDNGYQEVQCKNQQIVIMDSLNETKPLEIEKVLVGQGTNLVNATTPCREAFPK.

Cys-141 functions as the Nucleophile in the catalytic mechanism. Active-site residues include Asp-315 and His-317.

It belongs to the peptidase C54 family.

The protein localises to the cytoplasm. Its subcellular location is the nucleus. It is found in the preautophagosomal structure. The enzyme catalyses [protein]-C-terminal L-amino acid-glycyl-phosphatidylethanolamide + H2O = [protein]-C-terminal L-amino acid-glycine + a 1,2-diacyl-sn-glycero-3-phosphoethanolamine. Its function is as follows. Cysteine protease that plays a key role in cytoplasm to vacuole transport (Cvt) and autophagy by mediating both proteolytic activation and delipidation of ATG8. Required for selective autophagic degradation of the nucleus (nucleophagy) as well as for mitophagy which contributes to regulate mitochondrial quantity and quality by eliminating the mitochondria to a basal level to fulfill cellular energy requirements and preventing excess ROS production. The protease activity is required for proteolytic activation of ATG8: cleaves the C-terminal amino acid of ATG8 to reveal a C-terminal glycine. ATG8 ubiquitin-like activity requires the exposure of the glycine at the C-terminus for its conjugation to phosphatidylethanolamine (PE) and its insertion to membranes, which is necessary for autophagy. The ATG8-PE conjugate mediates tethering between adjacent membranes and stimulates membrane hemifusion, leading to expansion of the autophagosomal membrane during autophagy. In addition to the protease activity, also catalyzes deconjugation of PE-conjugated forms of ATG8 during macroautophagy: ATG8 delipidation is required to release the protein from membranes, which facilitates multiple events during macroautophagy, and especially for efficient autophagosome biogenesis, the assembly of ATG9-containing tubulovesicular clusters into phagophores/autophagosomes, and for the disassembly of PAS-associated ATG components. ATG8 delipidation by ATG4 also recycles ATG8-PE generated on inappropriate membranes to maintain a reservoir of unlipidated ATG8 that is required for autophagosome formation at the PAS. The protein is Probable cysteine protease ATG4 (ATG4) of Candida glabrata (strain ATCC 2001 / BCRC 20586 / JCM 3761 / NBRC 0622 / NRRL Y-65 / CBS 138) (Yeast).